We begin with the raw amino-acid sequence, 108 residues long: MNRGFVTGVRIATKCANKSSNCGFKAASSNNIYNSFKATCTLNNNNNNSNIPSSSSSSPSFASFFSSTSTSATLNGSSNNKTVVPKSLENISSASQFNFSTFFIISDV.

The segment covering asparagine 48–threonine 73 has biased composition (low complexity). The interval asparagine 48–lysine 81 is disordered.

This is an uncharacterized protein from Dictyostelium discoideum (Social amoeba).